The chain runs to 542 residues: uncharacterized protein (542 aa).

The next 5 helical transmembrane spans lie at 4 to 23 (FVENQLLALVAIMGIGLLLG), 28 to 47 (FGFRLGVAAVLFVGLAFSTI), 51 to 70 (ITVPPLIYVVGLALFVYTIG), 91 to 113 (LALGAIIATTAIAWVVIKALGLA), and 160 to 182 (YSLTYPLGVLVVILTIAVCGGLF). RCK C-terminal domains are found at residues 190-272 (AKNA…LLGE) and 274-355 (VDGH…IFGD). A run of 5 helical transmembrane segments spans residues 363 to 385 (FNLVPLVVGLSLGVLVGMMEFPL), 390 to 412 (ALSLGNAGGPLLIALLLGAMGRT), 425 to 447 (LALRQLGITMFLAAIGTTAGAGF), 457 to 479 (LLIIGVGALLTLVISVLVLVIGH), and 519 to 541 (YTSVYPLAMVAKIIAAQVLLFLL).

It belongs to the AAE transporter (TC 2.A.81) family.

It localises to the cell membrane. This is an uncharacterized protein from Corynebacterium efficiens (strain DSM 44549 / YS-314 / AJ 12310 / JCM 11189 / NBRC 100395).